We begin with the raw amino-acid sequence, 149 residues long: Ribosome-binding factor A (149 aa).

The disordered stretch occupies residues 124 to 149 (AKLREGAVPAGDADPYKTSSKSESEE).

Belongs to the RbfA family. Monomer. Binds 30S ribosomal subunits, but not 50S ribosomal subunits or 70S ribosomes.

The protein localises to the cytoplasm. Functionally, one of several proteins that assist in the late maturation steps of the functional core of the 30S ribosomal subunit. Associates with free 30S ribosomal subunits (but not with 30S subunits that are part of 70S ribosomes or polysomes). Required for efficient processing of 16S rRNA. May interact with the 5'-terminal helix region of 16S rRNA. The chain is Ribosome-binding factor A from Corynebacterium glutamicum (strain R).